The primary structure comprises 278 residues: S-formylglutathione hydrolase YeiG (278 aa).

Residues S145, D223, and H256 each act as charge relay system in the active site.

It belongs to the esterase D family.

It catalyses the reaction S-formylglutathione + H2O = formate + glutathione + H(+). Functionally, serine hydrolase involved in the detoxification of formaldehyde. Hydrolyzes S-formylglutathione to glutathione and formate. In Shigella boydii serotype 4 (strain Sb227), this protein is S-formylglutathione hydrolase YeiG (yeiG).